Here is an 88-residue protein sequence, read N- to C-terminus: Small ribosomal subunit protein bS20 (88 aa).

The protein belongs to the bacterial ribosomal protein bS20 family.

Binds directly to 16S ribosomal RNA. This Syntrophomonas wolfei subsp. wolfei (strain DSM 2245B / Goettingen) protein is Small ribosomal subunit protein bS20.